We begin with the raw amino-acid sequence, 116 residues long: Cuticle protein AM1274 (116 aa).

At Gln1 the chain carries Pyrrolidone carboxylic acid. A disordered region spans residues 1-22; that stretch reads QLANEPPIEIIRQESTDNGDGN. In terms of domain architecture, Chitin-binding type R&amp;R spans 20 to 85; sequence DGNFNFLFET…PVSDFIPTPH (66 aa). Thr83 is a glycosylation site (O-linked (HexNAc) threonine).

Arthrodial membrane.

In Cancer pagurus (Rock crab), this protein is Cuticle protein AM1274.